The chain runs to 448 residues: B-cell lymphoma 3 protein homolog (448 aa).

Positions 1–54 (MPRCPAGAMDEGPVDLRTRPKGTPGAALPLRKRPLRPASPEPATTRSPAGPLDA) are disordered. Residue serine 39 is modified to Phosphoserine. 7 ANK repeats span residues 129–161 (DGDT…REVD), 166–195 (LRQT…SPMA), 199–228 (HGQT…SGSV), 236–265 (EGLT…DIDA), 270–299 (SGRS…NVNA), 303–332 (SGSS…DSGL), and 333–362 (KNCH…RAAS). Positions 356 to 448 (KASRAASGSQ…VPPSPAPGSS (93 aa)) are disordered. Polar residues predominate over residues 361–376 (ASGSQPEPSPDQSATN). Serine 369 is subject to Phosphoserine. The segment covering 377 to 398 (SPESSSRLSSNGLQSSPSSSPS) has biased composition (low complexity). 2 positions are modified to phosphoserine; by GSK3: serine 396 and serine 400. Polar residues predominate over residues 411–423 (TPQNFFLPTTSTP). Residues 425–436 (FLPFPGVLRGPG) show a composition bias toward low complexity. The segment covering 437–448 (RPVPPSPAPGSS) has biased composition (pro residues).

As to quaternary structure, component of a complex consisting of the NF-kappa-B p52-p52 homodimer and BCL3. Component of a complex consisting of the NF-kappa-B p50-p50 homodimer and BCL3. Interacts with N4BP2, COPS5 and PIR. Interacts with CYLD. In terms of processing, polyubiquitinated. Ubiquitination via 'Lys-63'-linked ubiquitin chains is required for nuclear accumulation. Deubiquitinated by CYLD, which acts on 'Lys-63'-linked ubiquitin chains. Deubiquitination by CYLD prevents nuclear accumulation. Post-translationally, activated by phosphorylation.

The protein localises to the nucleus. It localises to the cytoplasm. The protein resides in the perinuclear region. Its function is as follows. Contributes to the regulation of transcriptional activation of NF-kappa-B target genes. In the cytoplasm, inhibits the nuclear translocation of the NF-kappa-B p50 subunit. In the nucleus, acts as a transcriptional activator that promotes transcription of NF-kappa-B target genes. Contributes to the regulation of cell proliferation. This chain is B-cell lymphoma 3 protein homolog (Bcl3), found in Mus musculus (Mouse).